The following is a 106-amino-acid chain: Cell cycle protein GpsB (106 aa).

Residues 34 to 67 (LDVIIQDYDNFKQEIDRLKAENEKLKKSTPAVEQ) adopt a coiled-coil conformation. The interval 55 to 83 (NEKLKKSTPAVEQSRSRSQQPPTSQVNYD) is disordered. The span at 70–79 (SRSQQPPTSQ) shows a compositional bias: low complexity.

The protein belongs to the GpsB family. In terms of assembly, forms polymers through the coiled coil domains. Interacts with PBP1, MreC and EzrA.

Its subcellular location is the cytoplasm. In terms of biological role, divisome component that associates with the complex late in its assembly, after the Z-ring is formed, and is dependent on DivIC and PBP2B for its recruitment to the divisome. Together with EzrA, is a key component of the system that regulates PBP1 localization during cell cycle progression. Its main role could be the removal of PBP1 from the cell pole after pole maturation is completed. Also contributes to the recruitment of PBP1 to the division complex. Not essential for septum formation. In Oceanobacillus iheyensis (strain DSM 14371 / CIP 107618 / JCM 11309 / KCTC 3954 / HTE831), this protein is Cell cycle protein GpsB.